The sequence spans 155 residues: SsrA-binding protein (155 aa).

The protein belongs to the SmpB family.

The protein localises to the cytoplasm. Its function is as follows. Required for rescue of stalled ribosomes mediated by trans-translation. Binds to transfer-messenger RNA (tmRNA), required for stable association of tmRNA with ribosomes. tmRNA and SmpB together mimic tRNA shape, replacing the anticodon stem-loop with SmpB. tmRNA is encoded by the ssrA gene; the 2 termini fold to resemble tRNA(Ala) and it encodes a 'tag peptide', a short internal open reading frame. During trans-translation Ala-aminoacylated tmRNA acts like a tRNA, entering the A-site of stalled ribosomes, displacing the stalled mRNA. The ribosome then switches to translate the ORF on the tmRNA; the nascent peptide is terminated with the 'tag peptide' encoded by the tmRNA and targeted for degradation. The ribosome is freed to recommence translation, which seems to be the essential function of trans-translation. In Lactococcus lactis subsp. lactis (strain IL1403) (Streptococcus lactis), this protein is SsrA-binding protein.